The following is a 70-amino-acid chain: Small ribosomal subunit protein bS21 (70 aa).

The protein belongs to the bacterial ribosomal protein bS21 family.

This is Small ribosomal subunit protein bS21 from Azoarcus sp. (strain BH72).